We begin with the raw amino-acid sequence, 68 residues long: Phage-like element PBSX protein XtrA (68 aa).

This sequence to B.subtilis YqaO.

The polypeptide is Phage-like element PBSX protein XtrA (xtrA) (Bacillus subtilis (strain 168)).